Here is a 652-residue protein sequence, read N- to C-terminus: Drebrin (652 aa).

The residue at position 2 (alanine 2) is an N-acetylalanine. In terms of domain architecture, ADF-H spans 5-134 (GFAAHRLELL…DPGAIGQRLS (130 aa)). Composition is skewed to basic and acidic residues over residues 211-236 (MEQE…EEHR) and 288-298 (DNPREFFKQQE). Disordered stretches follow at residues 211 to 350 (MEQE…YITC) and 371 to 652 (SAAG…GGGL). Low complexity predominate over residues 328–340 (SGPPSSSSSSSSP). Pro residues predominate over residues 507-517 (PDTPAGPPVPP). 2 stretches are compositionally biased toward acidic residues: residues 540–554 (QHEE…EEAT) and 640–652 (PLPE…GGGL).

As to expression, brain neurons.

It is found in the cytoplasm. The protein localises to the cell projection. It localises to the dendrite. Its subcellular location is the cell cortex. The protein resides in the cell junction. It is found in the growth cone. Its function is as follows. Actin cytoskeleton-organizing protein that plays a role in the formation of cell projections. Plays a role in dendritic spine morphogenesis and organization, including the localization of the dopamine receptor DRD1 to the dendritic spines. Involved in synaptic plasticity. This is Drebrin (DBN1) from Gallus gallus (Chicken).